Consider the following 153-residue polypeptide: MLRISNKIRFYCKIAAKSDLKSKLDFTQLRHPTKVPQQPEPNAFPDLDNNTDDDPIDSKTIQLLERLSLVDLDSEEALKTLKSSIQFANRIVDIPTENVPALYTVLEKQQLQLRNDSVTEGNCRQEILRNAKITDEDYFVSPPGNIPLEQQNE.

A disordered region spans residues 31–55 (HPTKVPQQPEPNAFPDLDNNTDDDP).

This sequence belongs to the GatC family. In terms of assembly, subunit of the heterotrimeric GatCAB amidotransferase (AdT) complex, composed of A, B and C subunits.

It is found in the mitochondrion. The catalysed reaction is L-glutamyl-tRNA(Gln) + L-glutamine + ATP + H2O = L-glutaminyl-tRNA(Gln) + L-glutamate + ADP + phosphate + H(+). Functionally, allows the formation of correctly charged Gln-tRNA(Gln) through the transamidation of misacylated Glu-tRNA(Gln) in the mitochondria. The reaction takes place in the presence of glutamine and ATP through an activated gamma-phospho-Glu-tRNA(Gln). This chain is Glutamyl-tRNA(Gln) amidotransferase subunit C, mitochondrial, found in Drosophila willistoni (Fruit fly).